Here is a 144-residue protein sequence, read N- to C-terminus: Small ribosomal subunit protein eS12y (144 aa).

Serine 2 carries the post-translational modification N-acetylserine.

Belongs to the eukaryotic ribosomal protein eS12 family.

In Arabidopsis thaliana (Mouse-ear cress), this protein is Small ribosomal subunit protein eS12y (RPS12C).